The chain runs to 573 residues: Solute carrier family 41 member 2 (573 aa).

At 1–162 (MTHSKGRPVT…KESSGVMALQ (162 aa)) the chain is on the extracellular side. Residues Ser137 and Ser138 each carry the phosphoserine modification. A helical transmembrane segment spans residues 163–183 (ILVPFLLAGFGTVSAGMVLDI). Topologically, residues 184–195 (VQHWEVFKNVTE) are cytoplasmic. Residues 196-216 (VFILVPALLGLKGNLEMTLAS) form a helical membrane-spanning segment. Over 217-245 (RLSTAVNVGKMDSPIEKWNLIIGNLALKQ) the chain is Extracellular. The helical transmembrane segment at 246–266 (VQATVVGFLAAVAAIILGWIP) threads the bilayer. Over 267-282 (EGKYYLSHSILLCSSS) the chain is Cytoplasmic. A helical transmembrane segment spans residues 283-303 (VATAFIASLLQGIIMVGVIVG). At 304-313 (SKKTGINPDN) the chain is on the extracellular side. Residues 314-334 (VATPIAASFGDLITLAILAWI) form a helical membrane-spanning segment. The Cytoplasmic segment spans residues 335–347 (SQGLYSCLETYYY). The helical transmembrane segment at 348–368 (ISPLVCAFFLALTPIWIIIAA) threads the bilayer. Over 369-376 (KHPATRTV) the chain is Extracellular. A helical membrane pass occupies residues 377–397 (LHSGWEPVITAMVISSIGGLI). Over 398–406 (LDTTVSDPN) the chain is Cytoplasmic. Residues 407 to 427 (LVGIVVYTPVINGIGGNLVAI) form a helical membrane-spanning segment. Over 428–469 (QASRISTYLHLHSIPGELPEEPKGCSYPFRTFFGSGVNNKSA) the chain is Extracellular. A helical transmembrane segment spans residues 470–490 (QVLLLFVIPGHLIFLYTIHLM). At 491-498 (KSGHTSLT) the chain is on the cytoplasmic side. The helical transmembrane segment at 499–519 (VVFVVVYLFAAVLQVFTLLWI) threads the bilayer. The Extracellular segment spans residues 520–543 (ADWMVHRFWRKGKDPDSFSIPYLT). The chain crosses the membrane as a helical span at residues 544–564 (ALGDLLGTALLALSFHFLWLI). Residues 565–573 (GDRDGDVGD) lie on the Cytoplasmic side of the membrane.

It belongs to the SLC41A transporter family.

It is found in the cell membrane. It catalyses the reaction Mg(2+)(in) = Mg(2+)(out). The catalysed reaction is Mn(2+)(in) = Mn(2+)(out). It carries out the reaction Co(2+)(in) = Co(2+)(out). The enzyme catalyses Ni(2+)(in) = Ni(2+)(out). It catalyses the reaction Fe(2+)(in) = Fe(2+)(out). Acts as a plasma-membrane magnesium transporter. Can also mediate the transport of other divalent metal cations in an order of Ba(2+) &gt; Ni(2+) &gt; Co(2+) &gt; Fe(2+) &gt; Mn(2+). This chain is Solute carrier family 41 member 2 (Slc41a2), found in Mus musculus (Mouse).